Here is an 86-residue protein sequence, read N- to C-terminus: Anti-adapter protein IraP (86 aa).

Positions Met-1 to Met-36 form a coiled coil.

This sequence belongs to the IraP family. In terms of assembly, interacts with RssB.

The protein resides in the cytoplasm. Inhibits RpoS proteolysis by regulating RssB activity, thereby increasing the stability of the sigma stress factor RpoS especially during phosphate starvation, but also in stationary phase and during nitrogen starvation. Its effect on RpoS stability is due to its interaction with RssB, which probably blocks the interaction of RssB with RpoS, and the consequent delivery of the RssB-RpoS complex to the ClpXP protein degradation pathway. This Shigella boydii serotype 18 (strain CDC 3083-94 / BS512) protein is Anti-adapter protein IraP.